Consider the following 143-residue polypeptide: Transcriptional regulator MraZ (143 aa).

2 SpoVT-AbrB domains span residues 5-47 (THSP…SQKE) and 76-119 (ASDE…DADA).

The protein belongs to the MraZ family. Forms oligomers.

It localises to the cytoplasm. It is found in the nucleoid. The protein is Transcriptional regulator MraZ of Paenarthrobacter aurescens (strain TC1).